Reading from the N-terminus, the 715-residue chain is DNA ligase (715 aa).

NAD(+)-binding positions include 47-51 (DADYD), 96-97 (SL), and glutamate 128. The active-site N6-AMP-lysine intermediate is lysine 130. Arginine 151, glutamate 188, lysine 306, and lysine 330 together coordinate NAD(+). Residues cysteine 435, cysteine 438, cysteine 453, and cysteine 459 each coordinate Zn(2+). The BRCT domain occupies 637–715 (RRDTAVAGKT…EDEWLALIGN (79 aa)).

The protein belongs to the NAD-dependent DNA ligase family. LigA subfamily. Mg(2+) serves as cofactor. It depends on Mn(2+) as a cofactor.

The enzyme catalyses NAD(+) + (deoxyribonucleotide)n-3'-hydroxyl + 5'-phospho-(deoxyribonucleotide)m = (deoxyribonucleotide)n+m + AMP + beta-nicotinamide D-nucleotide.. Its function is as follows. DNA ligase that catalyzes the formation of phosphodiester linkages between 5'-phosphoryl and 3'-hydroxyl groups in double-stranded DNA using NAD as a coenzyme and as the energy source for the reaction. It is essential for DNA replication and repair of damaged DNA. This chain is DNA ligase, found in Rhodopseudomonas palustris (strain TIE-1).